A 120-amino-acid polypeptide reads, in one-letter code: Large ribosomal subunit protein uL18 (120 aa).

It belongs to the universal ribosomal protein uL18 family. As to quaternary structure, part of the 50S ribosomal subunit; part of the 5S rRNA/L5/L18/L25 subcomplex. Contacts the 5S and 23S rRNAs.

Functionally, this is one of the proteins that bind and probably mediate the attachment of the 5S RNA into the large ribosomal subunit, where it forms part of the central protuberance. The polypeptide is Large ribosomal subunit protein uL18 (Clostridium novyi (strain NT)).